The following is a 510-amino-acid chain: MTHPDISVDVLVIGAGPTGLGAAKRLNQIDGPSWMIVDSNETPGGLASTDVTPEGFLYDVGGHVIFSHYKYFDDCLDEALPKEDDWYTHQRISYVRCQGQWVPYPFQNNISMLPKEEQVKCIDGMIDAALEARVANTKPKTFDEWIVRMMGTGIADLFMRPYNFKVWAVPTTKMQCAWLGERVAAPNLKAVTTNVILGKTAGNWGPNATFRFPARGGTGGIWIAVANTLPKEKTRFGEKGKVTKVNANNKTVTLQDGTTIGYKKLVSTMAVDFLAEAMNDQELVGLTKQLFYSSTHVIGVGVRGSRPERIGDKCWLYFPEDNCPFYRATIFSNYSPYNQPEASKKLPTMQLADGSRPQSTEAKEGPYWSIMLEVSESSMKPVNQETILADCIQGLVNTEMLKPTDEIVSTYHRRFDHGYPTPTLEREGALTQILPKLQDKDIWSRGRFGSWRYEVGNQDHSFMLGVEAVDNIVNGAVELTLNYPDFVNGRQNTERRLVDGAQVFAKSKAQ.

Positions 18, 38, 46, and 61 each coordinate FAD. G61 and G62 together coordinate UDP-alpha-D-galactose. An FAD-binding site is contributed by H63. NADH-binding residues include H68, R91, and S93. Residues H68, R91, S93, and Y104 each coordinate NADPH. Positions 104, 107, 159, 162, 163, 167, and 182 each coordinate UDP-alpha-D-galactose. N203 lines the NADPH pocket. N207 is a binding site for UDP-alpha-D-galactose. FAD is bound at residue V242. Residues W315 and Y317 each contribute to the NADPH site. UDP-alpha-D-galactose-binding residues include Y317, R327, and Y419. R327 provides a ligand contact to FAD. NADH-binding residues include Y419 and R447. 2 residues coordinate NADPH: Y419 and R447. An FAD-binding site is contributed by R447. Y453 lines the UDP-alpha-D-galactose pocket. G456, N457, and Q458 together coordinate FAD. N457 contacts UDP-alpha-D-galactose. N457 lines the NADH pocket. N457 lines the NADPH pocket. H460 contributes to the NADPH binding site. Position 461 (S461) interacts with FAD.

Belongs to the UDP-galactopyranose/dTDP-fucopyranose mutase family. As to quaternary structure, homotetramer. FAD is required as a cofactor.

It catalyses the reaction UDP-alpha-D-galactose = UDP-alpha-D-galactofuranose. Functionally, UDP-galactopyranose mutase, key flavoenzyme of galactofuranose metabolism that catalyzes the 6-to-5 ring contraction of UDP-galactopyranose to UDP-galactofuranose, the donor used by various galacto-furanosyltransferases. Controls the biosynthesis of galactomannan and galactofuranose containing glycoconjugates. The flavin functions as nucleophile, forming a flavin-sugar adduct that facilitates galactose-ring opening and contraction. The binding of UDP-galactopyranose induces profound conformational changes in the enzyme and two loops on opposite sides of the active site move toward each other by over 10 Angstroms to cover the substrate and create a closed active site. This is UDP-galactopyranose mutase from Aspergillus fumigatus (Neosartorya fumigata).